The chain runs to 863 residues: Leucine--tRNA ligase (863 aa).

The 'HIGH' region signature appears at 42–52 (PYPSGKIHMGH). A 'KMSKS' region motif is present at residues 618 to 622 (KMSKS). ATP is bound at residue K621.

Belongs to the class-I aminoacyl-tRNA synthetase family.

The protein resides in the cytoplasm. The enzyme catalyses tRNA(Leu) + L-leucine + ATP = L-leucyl-tRNA(Leu) + AMP + diphosphate. The sequence is that of Leucine--tRNA ligase from Desulforapulum autotrophicum (strain ATCC 43914 / DSM 3382 / VKM B-1955 / HRM2) (Desulfobacterium autotrophicum).